Here is a 968-residue protein sequence, read N- to C-terminus: MPFTLGQRWISDTESELGLGTIVAMDARTVTLLFPSTGENRLYARSDSPVTRVMFNPGDTITSHEGWQLHIDEVKEENGLLVYVGTRLDTEETNVTLREVLLDSKLVFSKPQDRLFAGQIDRMDRFALRYRARKFQSEQYRMPYSGLRGQRTNLIPHQLNIAHDVGRRHAPRVLLADEVGLGKTIEAGMILHQQLLSGAAERVLIIVPETLQHQWLVEMLRRFNLRFALFDDERYTEAQHDAYNPFETEQLVICSLDFARRNKQRLEHLCDAEWDLLVVDEAHHLVWSTDAPSREYMAIEQLAERVPGVLLLTATPEQLGMESHFARLRLLDPNRFHDFEQFVEEQKNYRPVADAVAMLLAGNKLSNDELNRLGDLIGEQDIEPLLQAANSDRDDAQAARDELVSMLMDRHGTSRVLFRNTRNGVKGFPKRELHTVKLPLPTQYQTAIKVSGIMGARKSAEDRARDMLYPEQIYQEFEGDTGTWWNFDPRVEWLMGYLTSHRSQKVLVICAKATTALQLEQVLREREGIRAAVFHEGMSIIERDRAAAWFAEEDTGAQVLLCSEIGSEGRNFQFASNLVMFDLPFNPDLLEQRIGRLDRIGQAHDIQIHVPYLEKTAQSVLVRWYHEGLDAFEHTCPTGRAIYDSAYASLINYLAAPEETDGFDDLIKSCREQHEALKAQLEQGRDRLLEIHSNGGEKAQQLAQSIEEQDDDTNLIAFAMNLFDIVGINQDDRGDNLIVLTPSDHMLVPDFPGLPEDGCTITFERDVALSREDAQFITWEHPLIRNGLDLILSGDTGSSTISLLKNKALPVGTLLVELVYVVEAQAPKQLQLNRFLPPTPVRMLLDKNGNNLAAQVEFETFNRQLSAVNRHTGSKLVNAVQQDVHAILQLGETQIEKSARALIDNARREADEKLSGELSRLEALRAVNPNIRDDELAAIDSNRQQVLESLNQAGWRLDALRLIVVTHQ.

One can recognise a Helicase ATP-binding domain in the interval 164–334; it reads DVGRRHAPRV…FARLRLLDPN (171 aa). 177-184 lines the ATP pocket; sequence DEVGLGKT. The short motif at 280 to 283 is the DEAH box element; sequence DEAH. Positions 490–685 constitute a Helicase C-terminal domain; sequence RVEWLMGYLT…ALKAQLEQGR (196 aa).

The protein belongs to the SNF2/RAD54 helicase family. RapA subfamily. Interacts with the RNAP. Has a higher affinity for the core RNAP than for the holoenzyme. Its ATPase activity is stimulated by binding to RNAP.

In terms of biological role, transcription regulator that activates transcription by stimulating RNA polymerase (RNAP) recycling in case of stress conditions such as supercoiled DNA or high salt concentrations. Probably acts by releasing the RNAP, when it is trapped or immobilized on tightly supercoiled DNA. Does not activate transcription on linear DNA. Probably not involved in DNA repair. The polypeptide is RNA polymerase-associated protein RapA (Salmonella choleraesuis (strain SC-B67)).